A 213-amino-acid polypeptide reads, in one-letter code: Glycerol-3-phosphate acyltransferase (213 aa).

The next 5 membrane-spanning stretches (helical) occupy residues Leu3–Gly23, Ile68–Ala88, Val112–Leu132, Leu134–Leu154, and Leu163–Ile183.

This sequence belongs to the PlsY family. Probably interacts with PlsX.

Its subcellular location is the cell membrane. It carries out the reaction an acyl phosphate + sn-glycerol 3-phosphate = a 1-acyl-sn-glycero-3-phosphate + phosphate. Its pathway is lipid metabolism; phospholipid metabolism. Catalyzes the transfer of an acyl group from acyl-phosphate (acyl-PO(4)) to glycerol-3-phosphate (G3P) to form lysophosphatidic acid (LPA). This enzyme utilizes acyl-phosphate as fatty acyl donor, but not acyl-CoA or acyl-ACP. The polypeptide is Glycerol-3-phosphate acyltransferase (Streptococcus pyogenes serotype M28 (strain MGAS6180)).